The sequence spans 522 residues: Sorting nexin-1 (522 aa).

A disordered region spans residues 1–144; it reads MASGGGGCSA…EEEEQEDQFD (144 aa). Phosphoserine is present on residues S32 and S39. Acidic residues predominate over residues 35-45; that stretch reads EAGDSDTEGED. Residues T41 and T48 each carry the phosphothreonine modification. Positions 55–65 are enriched in polar residues; it reads KPQSPKKTTSL. Phosphoserine occurs at positions 58 and 72. The span at 71 to 80 shows a compositional bias: basic and acidic residues; sequence GSKENGIHED. Positions 98-125 are enriched in polar residues; that stretch reads LDSTQNNQKTMPGKTLTSHSPQEATNSP. Residues 132–143 show a composition bias toward acidic residues; it reads EELEEEEQEDQF. In terms of domain architecture, PX spans 143–272; it reads FDLTVGITDP…EFLEKEELPR (130 aa). Positions 186, 188, and 214 each coordinate a 1,2-diacyl-sn-glycero-3-phospho-(1D-myo-inositol-3-phosphate). At S188 the chain carries Phosphoserine. K237 carries the post-translational modification N6-acetyllysine. R238 serves as a coordination point for a 1,2-diacyl-sn-glycero-3-phospho-(1D-myo-inositol-3-phosphate). Residue S280 is modified to Phosphoserine. The interval 281–298 is membrane-binding amphipathic helix; that stretch reads GAGLLKMFNKATDAVSKM. The 221-residue stretch at 302–522 folds into the BAR domain; it reads MNESDIWFEE…AFLPEAKAIS (221 aa).

This sequence belongs to the sorting nexin family. In terms of assembly, predominantly forms heterodimers with BAR domain-containing sorting nexins SNX5, SNX6 and SNX32. Can self-associate to form homodimers. The heterodimers are proposed to self-assemble into helical arrays on the membrane to stabilize and expand local membrane curvature underlying endosomal tubule formation. Thought to be a component of the originally described retromer complex (also called SNX-BAR retromer) which is a pentamer containing the heterotrimeric retromer cargo-selective complex (CSC), also described as vacuolar protein sorting subcomplex (VPS) and a heterodimeric membrane-deforming subcomplex formed between SNX1 or SNX2 and SNX5 or SNX6 (also called SNX-BAR subcomplex); the respective CSC and SNX-BAR subcomplexes associate with low affinity. Interacts with SNX5, SNX6, SNX32, VPS26A, VPS29, VPS35, DRD5, DENND5A, KALRN, RHOG (GDP-bound form). The interaction with SNX2 is reported controversially. Interacts with DNAJC13; prevented by presence of HGS. Interacts with HGS.

It is found in the endosome membrane. The protein localises to the golgi apparatus. Its subcellular location is the trans-Golgi network membrane. The protein resides in the early endosome membrane. It localises to the cell projection. It is found in the lamellipodium. Involved in several stages of intracellular trafficking. Interacts with membranes containing phosphatidylinositol 3-phosphate (PtdIns(3P)) or phosphatidylinositol 3,5-bisphosphate (PtdIns(3,5)P2). Acts in part as component of the retromer membrane-deforming SNX-BAR subcomplex. The SNX-BAR retromer mediates retrograde transport of cargo proteins from endosomes to the trans-Golgi network (TGN) and is involved in endosome-to-plasma membrane transport for cargo protein recycling. The SNX-BAR subcomplex functions to deform the donor membrane into a tubular profile called endosome-to-TGN transport carrier (ETC). Can sense membrane curvature and has in vitro vesicle-to-membrane remodeling activity. Involved in retrograde endosome-to-TGN transport of lysosomal enzyme receptors (IGF2R, M6PR and SORT1). Plays a role in targeting ligand-activated EGFR to the lysosomes for degradation after endocytosis from the cell surface and release from the Golgi. Involvement in retromer-independent endocytic trafficking of P2RY1 and lysosomal degradation of protease-activated receptor-1/F2R. Promotes KALRN- and RHOG-dependent but retromer-independent membrane remodeling such as lamellipodium formation; the function is dependent on GEF activity of KALRN. Required for endocytosis of DRD5 upon agonist stimulation but not for basal receptor trafficking. This is Sorting nexin-1 (Snx1) from Mus musculus (Mouse).